Here is a 374-residue protein sequence, read N- to C-terminus: Biotin synthase (374 aa).

The Radical SAM core domain maps to 51 to 278; it reads NTVKVNYLVN…DTEIRIAGGR (228 aa). 3 residues coordinate [4Fe-4S] cluster: C66, C70, and C73. Positions 110, 143, 203, and 273 each coordinate [2Fe-2S] cluster. The tract at residues 346-374 is disordered; that stretch reads IAGGTSVAGSAPDPAIRRRGAGTDVPANA.

It belongs to the radical SAM superfamily. Biotin synthase family. In terms of assembly, homodimer. The cofactor is [4Fe-4S] cluster. Requires [2Fe-2S] cluster as cofactor.

The enzyme catalyses (4R,5S)-dethiobiotin + (sulfur carrier)-SH + 2 reduced [2Fe-2S]-[ferredoxin] + 2 S-adenosyl-L-methionine = (sulfur carrier)-H + biotin + 2 5'-deoxyadenosine + 2 L-methionine + 2 oxidized [2Fe-2S]-[ferredoxin]. Its pathway is cofactor biosynthesis; biotin biosynthesis; biotin from 7,8-diaminononanoate: step 2/2. In terms of biological role, catalyzes the conversion of dethiobiotin (DTB) to biotin by the insertion of a sulfur atom into dethiobiotin via a radical-based mechanism. The chain is Biotin synthase from Nocardioides sp. (strain ATCC BAA-499 / JS614).